Reading from the N-terminus, the 427-residue chain is Gamma-glutamyl phosphate reductase (427 aa).

Belongs to the gamma-glutamyl phosphate reductase family.

It is found in the cytoplasm. It catalyses the reaction L-glutamate 5-semialdehyde + phosphate + NADP(+) = L-glutamyl 5-phosphate + NADPH + H(+). The protein operates within amino-acid biosynthesis; L-proline biosynthesis; L-glutamate 5-semialdehyde from L-glutamate: step 2/2. Catalyzes the NADPH-dependent reduction of L-glutamate 5-phosphate into L-glutamate 5-semialdehyde and phosphate. The product spontaneously undergoes cyclization to form 1-pyrroline-5-carboxylate. This Brucella ovis (strain ATCC 25840 / 63/290 / NCTC 10512) protein is Gamma-glutamyl phosphate reductase.